The chain runs to 305 residues: LysM and putative peptidoglycan-binding domain-containing protein 3 (305 aa).

Residues 1 to 216 (MAGRNQNRTV…PYYGADWGIG (216 aa)) are Extracellular-facing. N-linked (GlcNAc...) asparagine glycans are attached at residues asparagine 7 and asparagine 26. Serine 55 is modified (phosphoserine). One can recognise a LysM domain in the interval 65 to 109 (LTKDIQEGDTLNAVALQYCCTVADIKRVNNLISDQDFFALRSIKI). Residue asparagine 199 is glycosylated (N-linked (GlcNAc...) asparagine). Residues 217–237 (WWTAVVIMLIVGIITPVFYLL) form a helical membrane-spanning segment. The Cytoplasmic portion of the chain corresponds to 238–305 (YYEILAKVDV…PQAHDAQHKT (68 aa)). The tract at residues 253-305 (VGSSHLHPGLTPPTQHREMENEIGPTKGIPVGQQDDHKLYRQDPQAHDAQHKT) is disordered. The span at 286-305 (QDDHKLYRQDPQAHDAQHKT) shows a compositional bias: basic and acidic residues.

Its subcellular location is the cell membrane. The protein resides in the golgi apparatus. In terms of biological role, essential for Golgi structural integrity. This chain is LysM and putative peptidoglycan-binding domain-containing protein 3 (Lysmd3), found in Mus musculus (Mouse).